Consider the following 104-residue polypeptide: ATP-dependent Clp protease adapter protein ClpS (104 aa).

Belongs to the ClpS family. In terms of assembly, binds to the N-terminal domain of the chaperone ClpA.

Its function is as follows. Involved in the modulation of the specificity of the ClpAP-mediated ATP-dependent protein degradation. This is ATP-dependent Clp protease adapter protein ClpS from Neisseria gonorrhoeae (strain ATCC 700825 / FA 1090).